The chain runs to 435 residues: ATP-dependent protease ATPase subunit HslU (435 aa).

Residues valine 18, 60–65, aspartate 248, glutamate 313, and arginine 385 each bind ATP; that span reads GVGKTE.

The protein belongs to the ClpX chaperone family. HslU subfamily. A double ring-shaped homohexamer of HslV is capped on each side by a ring-shaped HslU homohexamer. The assembly of the HslU/HslV complex is dependent on binding of ATP.

It localises to the cytoplasm. Its function is as follows. ATPase subunit of a proteasome-like degradation complex; this subunit has chaperone activity. The binding of ATP and its subsequent hydrolysis by HslU are essential for unfolding of protein substrates subsequently hydrolyzed by HslV. HslU recognizes the N-terminal part of its protein substrates and unfolds these before they are guided to HslV for hydrolysis. The sequence is that of ATP-dependent protease ATPase subunit HslU from Rhodospirillum rubrum (strain ATCC 11170 / ATH 1.1.1 / DSM 467 / LMG 4362 / NCIMB 8255 / S1).